A 1574-amino-acid polypeptide reads, in one-letter code: Synaptojanin-1 (1574 aa).

Positions 119 to 442 (VRKVLNSGNF…GDSISKIYAG (324 aa)) constitute an SAC domain. A phosphoserine mark is found at Ser-820 and Ser-830. The RRM domain occupies 894–971 (GTVLVSIKSS…RTITITLKSP (78 aa)). Over residues 1029-1054 (HLQPSSSSGLGTSPSSSPRTSPCQSP) the composition is skewed to low complexity. Residues 1029–1327 (HLQPSSSSGL…GVKQEPTLKS (299 aa)) form a disordered region. The residue at position 1053 (Ser-1053) is a Phosphoserine. The segment covering 1080 to 1100 (SSQGSPVDTQPAAQKDSSQTL) has biased composition (polar residues). The span at 1105–1127 (PPPPRPVAPPARPAPPQRPPPPS) shows a compositional bias: pro residues. 2 positions are modified to phosphoserine: Ser-1147 and Ser-1175. At Arg-1198 the chain carries Omega-N-methylarginine. Phosphothreonine is present on Thr-1217. Over residues 1268-1287 (TMPPSGPQPNLETPPQPPPR) the composition is skewed to pro residues. Residues 1288–1307 (SRSSQSLPSDSSPQLQQEQP) are compositionally biased toward low complexity. Phosphoserine is present on residues Ser-1290 and Ser-1350. Thr-1354 is subject to Phosphothreonine. Disordered stretches follow at residues 1363–1507 (LPSA…SVCP) and 1532–1574 (LPAR…FTER). 4 stretches are compositionally biased toward polar residues: residues 1364-1379 (PSAS…SVSC), 1393-1402 (QESMGSSANP), 1424-1436 (RVQS…TSWL), and 1472-1484 (DLQS…TSNP). Residues 1403–1425 (FPSLPCRNPFTDRTAAPGNPFRV) are 3 X 3 AA repeats of N-P-F. Residues 1535-1548 (RRPPPPPPPVPLLP) are compositionally biased toward pro residues. Residues 1549 to 1563 (PGTTSSAGPSTTLPS) show a composition bias toward low complexity. Positions 1565-1574 (APSTLDFTER) are enriched in polar residues.

This sequence belongs to the synaptojanin family. It in the central section; belongs to the inositol 1,4,5-trisphosphate 5-phosphatase family. As to quaternary structure, interacts with ASH/GRB2. Interacts with PACSIN1, PACSIN2 and PACSIN3. Interacts with AMPH, SH3GL1, SH3GL2 and SH3GL3. Interacts with MYO1E (via SH3 domain). Interacts with BIN1 and DNM1. Interacts with EPS15.

The protein localises to the cytoplasm. Its subcellular location is the perinuclear region. It carries out the reaction a 1,2-diacyl-sn-glycero-3-phospho-(1D-myo-inositol-4,5-bisphosphate) + H2O = a 1,2-diacyl-sn-glycero-3-phospho-(1D-myo-inositol 4-phosphate) + phosphate. In terms of biological role, phosphatase that acts on various phosphoinositides, including phosphatidylinositol 4-phosphate, phosphatidylinositol (4,5)-bisphosphate and phosphatidylinositol (3,4,5)-trisphosphate. Has a role in clathrin-mediated endocytosis. Hydrolyzes PIP2 bound to actin regulatory proteins resulting in the rearrangement of actin filaments downstream of tyrosine kinase and ASH/GRB2. This Mus musculus (Mouse) protein is Synaptojanin-1 (Synj1).